Here is a 496-residue protein sequence, read N- to C-terminus: Probable malate:quinone oxidoreductase (496 aa).

Belongs to the MQO family. FAD is required as a cofactor.

It carries out the reaction (S)-malate + a quinone = a quinol + oxaloacetate. Its pathway is carbohydrate metabolism; tricarboxylic acid cycle; oxaloacetate from (S)-malate (quinone route): step 1/1. This Prochlorococcus marinus (strain MIT 9303) protein is Probable malate:quinone oxidoreductase.